The sequence spans 471 residues: UDP-N-acetylmuramate--L-alanine ligase (471 aa).

114–120 (GTHGKTT) contacts ATP.

The protein belongs to the MurCDEF family.

It localises to the cytoplasm. The catalysed reaction is UDP-N-acetyl-alpha-D-muramate + L-alanine + ATP = UDP-N-acetyl-alpha-D-muramoyl-L-alanine + ADP + phosphate + H(+). The protein operates within cell wall biogenesis; peptidoglycan biosynthesis. Its function is as follows. Cell wall formation. The polypeptide is UDP-N-acetylmuramate--L-alanine ligase (Rhizobium johnstonii (strain DSM 114642 / LMG 32736 / 3841) (Rhizobium leguminosarum bv. viciae)).